The following is a 398-amino-acid chain: MASNDKGLEEIPEGQIESNYDEITDSFDSMDLKPELLRGIYAYGFERPSAIQQRAIMPIIKGSDVIAQAQSGTGKTATFSISALQKIDPNLKACQALILAPTRELAQQIQKVVVAIGDFMSLECHACIGGTNVREDMKALQDGPQVVVGTPGRVQDMIQRRVLRTDQMKLFILDEADEMLSRGFTEQIYDIFQLLPQSTQVVLLSATMPQDVLEVTTKFMRDPVRILVKKQELTLEGIKQFYIAVEKEEWKLDTLSDLYETVTITQAVIFCNTRRKVDWLTDKLTARDFTVSAMHGDMEQSQRDVIMKEFRSGSSRVLIATDLLARGIDVQQVSLVINYDLPANRENYIHRIGRGGRFGRKGVAINFVTADDVRMMREIEQFYSTQIEEMPMNVADLI.

A Q motif motif is present at residues 25-53 (DSFDSMDLKPELLRGIYAYGFERPSAIQQ). Residues 56 to 226 (IMPIIKGSDV…TKFMRDPVRI (171 aa)) enclose the Helicase ATP-binding domain. 69–76 (AQSGTGKT) lines the ATP pocket. The DEAD box motif lies at 174 to 177 (DEAD). One can recognise a Helicase C-terminal domain in the interval 237 to 398 (GIKQFYIAVE…EMPMNVADLI (162 aa)).

Belongs to the DEAD box helicase family. eIF4A subfamily. Component of the eIF4F complex, which composition varies with external and internal environmental conditions. It is composed of at least eIF4A, eIF4E and eIF4G.

It localises to the cytoplasm. The enzyme catalyses ATP + H2O = ADP + phosphate + H(+). ATP-dependent RNA helicase which is a subunit of the eIF4F complex involved in cap recognition and is required for mRNA binding to ribosome. In the current model of translation initiation, eIF4A unwinds RNA secondary structures in the 5'-UTR of mRNAs which is necessary to allow efficient binding of the small ribosomal subunit, and subsequent scanning for the initiator codon. This is ATP-dependent RNA helicase eIF4A (tif1) from Aspergillus clavatus (strain ATCC 1007 / CBS 513.65 / DSM 816 / NCTC 3887 / NRRL 1 / QM 1276 / 107).